A 578-amino-acid chain; its full sequence is GTP diphosphokinase CRSH3, chloroplastic (578 aa).

The N-terminal 45 residues, 1–45 (MANAGVNETVAVAVAIDAPGVGHDHGAAGEVRRPSTRRLAPAGSG), are a transit peptide targeting the chloroplast. In terms of domain architecture, HD spans 99–199 (SVSRALVVAA…LELAVKLDAM (101 aa)). EF-hand domains are found at residues 468–503 (ATAGNVERAFQLLDKNGDGRISMEELTEIMEDLGAG) and 506–537 (DAEELMRLLDANSDGSLSSDEFALFQKRVKLK). Asp-481, Asn-483, Asp-485, Arg-487, Glu-492, Asp-515, Asn-517, Asp-519, Ser-521, and Glu-526 together coordinate Ca(2+).

The protein belongs to the RelA/SpoT family. Expressed in roots and shoots.

Its subcellular location is the plastid. The protein resides in the chloroplast. It carries out the reaction GTP + ATP = guanosine 3'-diphosphate 5'-triphosphate + AMP. Its activity is regulated as follows. Activated by calcium. Its function is as follows. Possesses calcium-dependent ppGpp (guanosine 3'-diphosphate 5'-diphosphate) synthetase activity in vitro and is able to functionally complement E.coli relA mutants. May be involved in a rapid plant ppGpp-mediated response to pathogens and other stresses. This Oryza sativa subsp. japonica (Rice) protein is GTP diphosphokinase CRSH3, chloroplastic.